The sequence spans 467 residues: ESX-4 secretion system protein eccD4 (467 aa).

A run of 11 helical transmembrane segments spans residues 122-142 (GALAASCITAGGGLMLVRNAL), 152-172 (ATAGVVAAAGLAALLFAVIAC), 186-206 (VIATIFGAVAGLLAVPGVPGV), 209-229 (VLVAAMAAAATSVLAMRITGC), 241-261 (AVVVAAATLVGAITAAPVPAI), 264-284 (LATLASFGLLEVSARMAVLLA), 319-339 (LTSLLAAFAASATIGAIGTAV), 344-364 (IHRSSMGGIALAAVTGALLLL), 374-394 (SLVFAICGITTVATAFTVAAD), 401-421 (PWIAALTAMLAAVAMFLGFVA), and 439-459 (CLALIAMVPLTAWLCGAYSAV).

It belongs to the EccD/Snm4 family. As to quaternary structure, part of the ESX-4 / type VII secretion system (T7SS), which is composed of cytosolic and membrane components.

The protein resides in the cell membrane. The polypeptide is ESX-4 secretion system protein eccD4 (eccD4) (Mycobacterium tuberculosis (strain CDC 1551 / Oshkosh)).